The sequence spans 265 residues: Non-structural protein 2a (265 aa).

Belongs to the coronaviruses ns2a protein family.

Its subcellular location is the host cytoplasm. Not essential for virus replication in transformed murine cells. This is Non-structural protein 2a from Mus musculus (Mouse).